Consider the following 835-residue polypeptide: Invasin (835 aa).

One can recognise a Big-1 domain in the interval 451-541 (VITSEVTDDG…QQATVDVRFA (91 aa)).

Belongs to the intimin/invasin family.

The protein resides in the cell outer membrane. Its function is as follows. Invasin is a protein that allows enteric bacteria to penetrate cultured mammalian cells. The entry of invasin in the cell is mediated by binding several beta-1 chain integrins. This chain is Invasin, found in Yersinia enterocolitica.